A 541-amino-acid chain; its full sequence is Malate synthase (541 aa).

Arginine 172 functions as the Proton acceptor in the catalytic mechanism. Catalysis depends on aspartate 452, which acts as the Proton donor.

The protein belongs to the malate synthase family.

The protein resides in the cytoplasm. It catalyses the reaction glyoxylate + acetyl-CoA + H2O = (S)-malate + CoA + H(+). The protein operates within carbohydrate metabolism; glyoxylate cycle; (S)-malate from isocitrate: step 2/2. The polypeptide is Malate synthase (mls) (Myxococcus xanthus (strain DK1622)).